The primary structure comprises 576 residues: Adenine deaminase 2 (576 aa).

Belongs to the metallo-dependent hydrolases superfamily. Adenine deaminase family. Mn(2+) is required as a cofactor.

The catalysed reaction is adenine + H2O + H(+) = hypoxanthine + NH4(+). The sequence is that of Adenine deaminase 2 from Desulfotalea psychrophila (strain LSv54 / DSM 12343).